We begin with the raw amino-acid sequence, 341 residues long: tRNA N6-adenosine threonylcarbamoyltransferase (341 aa).

2 residues coordinate Fe cation: His111 and His115. Substrate is bound by residues 134–138 (LVSGG), Asp167, Gly180, and Asn276. Position 304 (Asp304) interacts with Fe cation.

This sequence belongs to the KAE1 / TsaD family. Requires Fe(2+) as cofactor.

The protein localises to the cytoplasm. It catalyses the reaction L-threonylcarbamoyladenylate + adenosine(37) in tRNA = N(6)-L-threonylcarbamoyladenosine(37) in tRNA + AMP + H(+). Required for the formation of a threonylcarbamoyl group on adenosine at position 37 (t(6)A37) in tRNAs that read codons beginning with adenine. Is involved in the transfer of the threonylcarbamoyl moiety of threonylcarbamoyl-AMP (TC-AMP) to the N6 group of A37, together with TsaE and TsaB. TsaD likely plays a direct catalytic role in this reaction. The protein is tRNA N6-adenosine threonylcarbamoyltransferase of Pseudomonas syringae pv. tomato (strain ATCC BAA-871 / DC3000).